We begin with the raw amino-acid sequence, 600 residues long: Integrator complex subunit 11 (600 aa).

The Zn(2+) site is built by His68, His70, Asp72, His73, His157, and Asp178. The HXHXDH motif signature appears at 68 to 73 (HFHLDH). The active site involves Glu203. Lys381 participates in a covalent cross-link: Glycyl lysine isopeptide (Lys-Gly) (interchain with G-Cter in SUMO). Position 414 (His414) interacts with Zn(2+). Residues Lys462 and Lys475 each participate in a glycyl lysine isopeptide (Lys-Gly) (interchain with G-Cter in SUMO) cross-link. Residues 469–479 (LLPEAKKPRLL) carry the Nuclear localization signal motif.

The protein belongs to the metallo-beta-lactamase superfamily. RNA-metabolizing metallo-beta-lactamase-like family. INTS11 subfamily. Component of the Integrator complex, composed of core subunits INTS1, INTS2, INTS3, INTS4, INTS5, INTS6, INTS7, INTS8, INTS9/RC74, INTS10, INTS11/CPSF3L, INTS12, INTS13, INTS14 and INTS15. The core complex associates with protein phosphatase 2A subunits PPP2CA and PPP2R1A, to form the Integrator-PP2A (INTAC) complex. INTS11 is part of the RNA endonuclease subcomplex, composed of INTS4, INTS9, INTS11 and inositol hexakisphosphate (InsP6). Interacts with WDR73; interaction is required for the assembly of the RNA endonuclease subcomplex in the cytoplasm. Interacts with BRAT1; interaction is required for the assembly of the RNA endonuclease subcomplex and inhibits the endonuclease activity of INTS11 before formation of mature integrator complex. It depends on Zn(2+) as a cofactor. In terms of processing, sumoylated; sumoylation regulates its subcellular location and is required for integrator complex integrity.

It is found in the nucleus. It localises to the cytoplasm. The RNA endonuclease activity is inhibited by BRAT1 that forms hyrogen bond and hydrophobic interactions with the active site. In terms of biological role, RNA endonuclease component of the integrator complex, a multiprotein complex that terminates RNA polymerase II (Pol II) transcription in the promoter-proximal region of genes. The integrator complex provides a quality checkpoint during transcription elongation by driving premature transcription termination of transcripts that are unfavorably configured for transcriptional elongation: the complex terminates transcription by (1) catalyzing dephosphorylation of the C-terminal domain (CTD) of Pol II subunit POLR2A/RPB1 and SUPT5H/SPT5, (2) degrading the exiting nascent RNA transcript via endonuclease activity and (3) promoting the release of Pol II from bound DNA. The integrator complex is also involved in terminating the synthesis of non-coding Pol II transcripts, such as enhancer RNAs (eRNAs), small nuclear RNAs (snRNAs), telomerase RNAs and long non-coding RNAs (lncRNAs). Within the integrator complex, INTS11 constitutes the RNA endonuclease subunit that degrades exiting nascent RNA transcripts. Mediates recruitment of cytoplasmic dynein to the nuclear envelope, probably as component of the integrator complex. The sequence is that of Integrator complex subunit 11 from Mus musculus (Mouse).